The primary structure comprises 270 residues: Putative phosphoenolpyruvate synthase regulatory protein (270 aa).

154–161 (GVSRAGKT) is an ADP binding site.

The protein belongs to the pyruvate, phosphate/water dikinase regulatory protein family. PSRP subfamily.

The enzyme catalyses [pyruvate, water dikinase] + ADP = [pyruvate, water dikinase]-phosphate + AMP + H(+). The catalysed reaction is [pyruvate, water dikinase]-phosphate + phosphate + H(+) = [pyruvate, water dikinase] + diphosphate. In terms of biological role, bifunctional serine/threonine kinase and phosphorylase involved in the regulation of the phosphoenolpyruvate synthase (PEPS) by catalyzing its phosphorylation/dephosphorylation. In Deinococcus geothermalis (strain DSM 11300 / CIP 105573 / AG-3a), this protein is Putative phosphoenolpyruvate synthase regulatory protein.